Here is a 770-residue protein sequence, read N- to C-terminus: Arf-GAP with coiled-coil, ANK repeat and PH domain-containing protein 2 (770 aa).

A BAR domain is found at 1 to 226; sequence MKMTVDFEEC…MKDLGAQLDR (226 aa). A PH domain is found at 266 to 361; that stretch reads GIVMEGYLFK…WIKAVQTSIA (96 aa). Residues 371–391 form a disordered region; that stretch reads SEKLDKKSSPSTGSLDSGNES. Residues 379 to 388 are compositionally biased toward polar residues; that stretch reads SPSTGSLDSG. Residues S384 and S387 each carry the phosphoserine modification. The Arf-GAP domain occupies 399–520; that stretch reads ESALQRVQCI…KFVDKYSALL (122 aa). Residues 414–437 form a C4-type zinc finger; the sequence is CCDCGLADPRWASINLGITLCIEC. Position 521 is a phosphoserine (S521). The interval 542–572 is disordered; the sequence is ARASVHTPVKSNDSGIQQCSEDGRESLPSTV. Positions 550 to 561 are enriched in polar residues; sequence VKSNDSGIQQCS. S573 and S576 each carry phosphoserine. 3 ANK repeats span residues 632 to 661, 665 to 694, and 698 to 727; these read NQAT…NVNQ, QGRG…NQHA, and EGKD…NEEM. Y734 is subject to Phosphotyrosine. S767 is subject to Phosphoserine.

In terms of assembly, interacts with RAB35 (GTP-bound form); the interaction is direct and probably recruits ACAP2 to membranes. Interacts with MICALL1; the interaction is indirect through RAB35.

The protein resides in the endosome membrane. It localises to the cell membrane. With respect to regulation, GAP activity stimulated by phosphatidylinositol 4,5-bisphosphate (PIP2) and phosphatidic acid. GTPase-activating protein (GAP) for ADP ribosylation factor 6 (ARF6). Doesn't show GAP activity for RAB35. The chain is Arf-GAP with coiled-coil, ANK repeat and PH domain-containing protein 2 (Acap2) from Mus musculus (Mouse).